Consider the following 147-residue polypeptide: Acidic phospholipase A2 beta-bungarotoxin A4 chain (147 aa).

The signal sequence occupies residues 1 to 19 (MNPAHLLVLSAVCVSLLGA). Residues 20–27 (ANIPPQHL) constitute a propeptide that is removed on maturation. Cystine bridges form between Cys54/Cys146, Cys56/Cys72, Cys71/Cys127, Cys78/Cys120, Cys88/Cys113, and Cys106/Cys118. Ca(2+) contacts are provided by Tyr55, Gly57, and Gly59. The active site involves His75. Residue Asp76 coordinates Ca(2+). Residue Asp121 is part of the active site.

Belongs to the phospholipase A2 family. Group I subfamily. D49 sub-subfamily. In terms of assembly, heterodimer; disulfide-linked. The A chains have phospholipase A2 activity and the B chains show homology with the basic protease inhibitors. The cofactor is Ca(2+). As to expression, expressed by the venom gland.

The protein localises to the secreted. The enzyme catalyses a 1,2-diacyl-sn-glycero-3-phosphocholine + H2O = a 1-acyl-sn-glycero-3-phosphocholine + a fatty acid + H(+). Functionally, snake venom phospholipase A2 (PLA2) that inhibits neuromuscular transmission by blocking acetylcholine release from the nerve termini. PLA2 catalyzes the calcium-dependent hydrolysis of the 2-acyl groups in 3-sn-phosphoglycerides. The protein is Acidic phospholipase A2 beta-bungarotoxin A4 chain of Bungarus multicinctus (Many-banded krait).